The chain runs to 782 residues: Shutoff protein (782 aa).

Residues 262-329 (VMNQLLIKRA…AVLVTVELEC (68 aa)) are binding to host EIF4G. One can recognise an RRM domain in the interval 332 to 450 (RFFSDITTLR…SLWTGFDERT (119 aa)). 2 positions are modified to phosphotyrosine; by host: Tyr-349 and Tyr-665. The disordered stretch occupies residues 715 to 760 (GGRILGESGRGRGRGLGRMGGGGGGQPRRGSRGGGGRFQGRSDRRQ). Over residues 728 to 752 (RGLGRMGGGGGGQPRRGSRGGGGRF) the composition is skewed to gly residues.

Belongs to the adenoviridae shutoff protein family. Monomer. Interacts with hexon protein; this interaction allows chaperoning and trimerization of hexon proteins. Interacts (via N-terminus) with host initiation factor EIF4G (via C-terminus). Interacts (via RRM domain) with viral mRNAs that contain the tripartite leader; this interaction allows ribosome shunting and expression of viral late mRNAs. In terms of processing, might be cleaved by the viral protease. Post-translationally, phosphorylated. Tyrosine phosphorylation enhances preferential binding to tripartite leader mRNAs and allows ribosome shunting. Methylated. Asymmetric dimethylation by host PRMT1 of the Arg/Gly-rich region may regulate shutoff protein binding to hexon and promote the capsid assembly in the nucleus.

It localises to the host cytoplasm. Protein that inhibits host translation while promoting late viral translation by ribosome shunting. Blocks host cap-dependent translation by binding to eIF4G, displacing MKNK1 from cap initiation complexes and preventing EIF4E phosphorylation. Binds to the tripartite leader sequence of viral late mRNAs and recruits host eIF4G, PABPC1/poly-A binding protein and 40S ribosomes subunits on viral mRNAs, allowing ribosome shunting and efficient translation of late viral mRNAs even though conventional translation via ribosome scanning from the cap has been shut off in the host cell. During assembly, acts as a chaperone protein that helps hexon proteins assembly into trimers. This chain is Shutoff protein, found in Human adenovirus A serotype 12 (HAdV-12).